We begin with the raw amino-acid sequence, 391 residues long: Homocitrate synthase AksA (391 aa).

Residues isoleucine 20 to tyrosine 271 enclose the Pyruvate carboxyltransferase domain.

The protein belongs to the alpha-IPM synthase/homocitrate synthase family.

It catalyses the reaction acetyl-CoA + 2-oxoglutarate + H2O = (2R)-homocitrate + CoA + H(+). It carries out the reaction 2-oxoadipate + acetyl-CoA + H2O = (R)-dihomocitrate + CoA + H(+). The catalysed reaction is 2-oxoheptanedioate + acetyl-CoA + H2O = (R)-trihomocitrate + CoA + H(+). It functions in the pathway organic acid metabolism; 2-oxosuberate biosynthesis. In terms of biological role, catalyzes the condensation of alpha-ketoglutarate and acetyl-CoA to form (R)-homocitrate. Can also catalyze the condensation of alpha-ketoadipate with acetyl-CoA to form (R)-homo(2)citrate, and the condensation of alpha-ketopimelate with acetyl-CoA to form (R)-homo(3)citrate. These reactions are part of the biosynthesis pathway of coenzyme B and biotin. This Methanothermobacter thermautotrophicus (strain ATCC 29096 / DSM 1053 / JCM 10044 / NBRC 100330 / Delta H) (Methanobacterium thermoautotrophicum) protein is Homocitrate synthase AksA (aksA).